The following is a 354-amino-acid chain: DNA repair protein rhp57 (354 aa).

100–107 (GESGSGKS) is a binding site for ATP.

This sequence belongs to the RecA family.

It is found in the nucleus. Involved in recombination DNA repair and in the repair of gamma-ray-induced damage. In Schizosaccharomyces pombe (strain 972 / ATCC 24843) (Fission yeast), this protein is DNA repair protein rhp57 (rhp57).